The sequence spans 126 residues: Spermidine export protein MdtJ (126 aa).

Helical transmembrane passes span 1-21, 32-52, 55-75, and 82-102; these read MMIYWIFLGLAIVAEIIGTLS, TGHIVMYFMITGSYIMLALAV, VALGVAYALWEGIGILIITVF, and ESLSPLKIAGLVTLVGGIMLV. Residues 104-126 are disordered; that stretch reads SGTRKPKKPNSPNRNSGEHHATA.

The protein belongs to the drug/metabolite transporter (DMT) superfamily. Small multidrug resistance (SMR) (TC 2.A.7.1) family. MdtJ subfamily. As to quaternary structure, forms a complex with MdtI.

The protein resides in the cell inner membrane. Functionally, catalyzes the excretion of spermidine. This chain is Spermidine export protein MdtJ, found in Yersinia enterocolitica serotype O:8 / biotype 1B (strain NCTC 13174 / 8081).